Here is a 58-residue protein sequence, read N- to C-terminus: Small ribosomal subunit protein bS21 (58 aa).

The tract at residues 27–58 (GTLQELRKREHYEKPSVKRKRKSEAARKRKKY) is disordered. Basic and acidic residues predominate over residues 31–42 (ELRKREHYEKPS). Residues 43 to 58 (VKRKRKSEAARKRKKY) show a composition bias toward basic residues.

The protein belongs to the bacterial ribosomal protein bS21 family.

The chain is Small ribosomal subunit protein bS21 (rpsU) from Lactococcus lactis subsp. lactis (strain IL1403) (Streptococcus lactis).